The sequence spans 385 residues: Transcription termination factor 2, mitochondrial (385 aa).

A mitochondrion-targeting transit peptide spans 1–35 (MLWKLLLRSQSCRLCSFRKMRSPPKYRPFLACFTY).

This sequence belongs to the mTERF family. Monomer. In terms of tissue distribution, expressed in skeletal muscle, heart, liver and pancreas.

The protein localises to the mitochondrion. It is found in the mitochondrion matrix. The protein resides in the mitochondrion nucleoid. Its function is as follows. Binds mitochondrial DNA and plays a role in the regulation of transcription of mitochondrial mRNA and rRNA species. This is Transcription termination factor 2, mitochondrial (MTERF2) from Homo sapiens (Human).